Consider the following 417-residue polypeptide: Glucose-1-phosphatase (417 aa).

Positions 1-23 are cleaved as a signal peptide; that stretch reads MKYKVLTLCLSAALFAPIAPTMA. Position 41 (arginine 41) interacts with substrate. The Nucleophile role is filled by histidine 42. Arginine 45, arginine 118, and glutamate 220 together coordinate substrate. The Proton donor role is filled by aspartate 315.

The protein belongs to the histidine acid phosphatase family. In terms of assembly, homodimer.

It localises to the periplasm. It carries out the reaction alpha-D-glucose 1-phosphate + H2O = D-glucose + phosphate. The chain is Glucose-1-phosphatase (agp) from Providencia rettgeri.